Reading from the N-terminus, the 181-residue chain is Photosystem I assembly protein Ycf4 (181 aa).

A run of 2 helical transmembrane segments spans residues 19–39 (YFWAFFLLVGGLGFLLAGISS) and 62–82 (VMMFYGALSLGISIYTLLTII).

This sequence belongs to the Ycf4 family.

It localises to the plastid. The protein localises to the chloroplast thylakoid membrane. Functionally, seems to be required for the assembly of the photosystem I complex. This chain is Photosystem I assembly protein Ycf4, found in Phaeodactylum tricornutum (strain CCAP 1055/1).